A 117-amino-acid polypeptide reads, in one-letter code: Large ribosomal subunit protein uL23 (117 aa).

The protein belongs to the universal ribosomal protein uL23 family. As to quaternary structure, part of the 50S ribosomal subunit. Contacts protein L29, and trigger factor when it is bound to the ribosome.

In terms of biological role, one of the early assembly proteins it binds 23S rRNA. One of the proteins that surrounds the polypeptide exit tunnel on the outside of the ribosome. Forms the main docking site for trigger factor binding to the ribosome. The chain is Large ribosomal subunit protein uL23 from Acetivibrio thermocellus (strain ATCC 27405 / DSM 1237 / JCM 9322 / NBRC 103400 / NCIMB 10682 / NRRL B-4536 / VPI 7372) (Clostridium thermocellum).